Here is a 265-residue protein sequence, read N- to C-terminus: Protein Rv2993c (265 aa).

The a divalent metal cation site is built by glutamate 114, glutamate 116, and aspartate 145.

It in the C-terminal section; belongs to the FAH family. It depends on a divalent metal cation as a cofactor.

The polypeptide is Protein Rv2993c (Mycobacterium tuberculosis (strain ATCC 25618 / H37Rv)).